An 861-amino-acid polypeptide reads, in one-letter code: Leucine--tRNA ligase (861 aa).

A 'HIGH' region motif is present at residues 42-52 (PYPSGKLHMGH). A 'KMSKS' region motif is present at residues 620 to 624 (KMSKS). ATP is bound at residue K623.

It belongs to the class-I aminoacyl-tRNA synthetase family.

The protein localises to the cytoplasm. It carries out the reaction tRNA(Leu) + L-leucine + ATP = L-leucyl-tRNA(Leu) + AMP + diphosphate. The sequence is that of Leucine--tRNA ligase from Buchnera aphidicola subsp. Schizaphis graminum (strain Sg).